Here is a 703-residue protein sequence, read N- to C-terminus: Polyribonucleotide nucleotidyltransferase (703 aa).

Mg(2+) is bound by residues Asp487 and Asp493. Residues 554–613 (PKMETIKIDPDKIRDVIGKGGATIRSICEDTGASIDIDDNGTVRIYAESKLAADEAIYRI) enclose the KH domain. In terms of domain architecture, S1 motif spans 623–691 (GKLYRGKVER…ARGRIKLSMK (69 aa)).

Belongs to the polyribonucleotide nucleotidyltransferase family. In terms of assembly, component of the RNA degradosome, which is a multiprotein complex involved in RNA processing and mRNA degradation. Requires Mg(2+) as cofactor.

The protein localises to the cytoplasm. The catalysed reaction is RNA(n+1) + phosphate = RNA(n) + a ribonucleoside 5'-diphosphate. In terms of biological role, involved in mRNA degradation. Catalyzes the phosphorolysis of single-stranded polyribonucleotides processively in the 3'- to 5'-direction. This is Polyribonucleotide nucleotidyltransferase from Hahella chejuensis (strain KCTC 2396).